Here is a 136-residue protein sequence, read N- to C-terminus: Small ribosomal subunit protein bS16 (136 aa).

Over residues 113–122 the composition is skewed to basic residues; the sequence is LALKSHRRSA. The interval 113-136 is disordered; that stretch reads LALKSHRRSAKKEAEAKAATGGEA.

Belongs to the bacterial ribosomal protein bS16 family.

The polypeptide is Small ribosomal subunit protein bS16 (Pelodictyon phaeoclathratiforme (strain DSM 5477 / BU-1)).